The sequence spans 99 residues: Integration host factor subunit alpha (99 aa).

Belongs to the bacterial histone-like protein family. As to quaternary structure, heterodimer of an alpha and a beta chain.

This protein is one of the two subunits of integration host factor, a specific DNA-binding protein that functions in genetic recombination as well as in transcriptional and translational control. In Anaeromyxobacter sp. (strain Fw109-5), this protein is Integration host factor subunit alpha.